The primary structure comprises 257 residues: Diacetyl reductase [(S)-acetoin forming] (257 aa).

6 to 30 contacts NAD(+); that stretch reads IITGAAGGLGKGIAERLANDGFNIV. Residue Ser139 participates in substrate binding. Tyr152 acts as the Proton acceptor in catalysis. Residue Lys156 is part of the active site.

Belongs to the short-chain dehydrogenases/reductases (SDR) family.

It catalyses the reaction (S)-acetoin + NAD(+) = diacetyl + NADH + H(+). Catalyzes the irreversible reduction of 2,3-butanediol to (S)-acetoin in the presence of NADH. This is Diacetyl reductase [(S)-acetoin forming] (butA) from Staphylococcus epidermidis (strain ATCC 12228 / FDA PCI 1200).